Reading from the N-terminus, the 161-residue chain is C-type natriuretic peptide (161 aa).

Residues Met-1–Pro-22 form the signal peptide. The disordered stretch occupies residues Asp-19–Gly-135. Positions Ala-23–Lys-139 are excised as a propeptide. Low complexity-rich tracts occupy residues Leu-29–Pro-60 and Ala-76–Arg-93. Residues Leu-94–Gln-104 are compositionally biased toward basic and acidic residues. Over residues Gly-120–Ser-130 the composition is skewed to gly residues. A disulfide bridge connects residues Cys-145 and Cys-161.

This sequence belongs to the natriuretic peptide family. In terms of tissue distribution, expressed by the venom gland.

The protein resides in the secreted. Snake venom natriuretic peptide that has a vasorelaxant activity in rat aortic strips and a diuretic potency in anesthetized rats. May act by activating natriuretic receptors (NPR1 and/or NPR2). The chain is C-type natriuretic peptide from Rhabdophis tigrinus tigrinus (Tiger keelback snake).